A 2282-amino-acid polypeptide reads, in one-letter code: Protein Ycf2 (2282 aa).

1637–1644 provides a ligand contact to ATP; it reads GSIGTGRS.

Belongs to the Ycf2 family.

Its subcellular location is the plastid. It localises to the chloroplast stroma. Probable ATPase of unknown function. Its presence in a non-photosynthetic plant (Epifagus virginiana) and experiments in tobacco indicate that it has an essential function which is probably not related to photosynthesis. The chain is Protein Ycf2 from Citrus sinensis (Sweet orange).